The following is a 70-amino-acid chain: UPF0426 protein ssl0294 (70 aa).

Belongs to the UPF0426 family.

The chain is UPF0426 protein ssl0294 from Synechocystis sp. (strain ATCC 27184 / PCC 6803 / Kazusa).